A 752-amino-acid chain; its full sequence is MTAGSVAAPQIIPIRIPPPGKAKHEIDSSTPVEIKSESPDVRVLYTLDGSKPELTKRPGFADSTLKYTEPVRLPVGKVYVKAMAISIDGRQSAVVTKVFVVEPSASDERELNAHDEDDSVKNDTAIDGKDVVENGTGVSSVKYLDISSNEAHRALKGPRFLSQRLGPGSSARLTAQNSQNQSADVVESPLKNLTNTQISRIQRETDFLRCPKCLSHRPSDPFARFCLHCGAPVPPIPGQRLPPTEGGQMGLCMHCKTMVPLNTAICVVCESPLDQQLQPQATLRLQDKFICHSCGTGNPAHITHCVTCESQLLRQARPVLSGQRAAPVPSSQGKMVSCSKCNRVNHSDARFCDWCGAKPGHKASSVKCSQCGASSHPYANHCGGCGVFLDGPPRMPLQVNQRQDAEEMQQTASAAELATAPPSVGLRMCADAQTQTVGLFFPSNTELKKRSQQREAELSRQEQMRDRKPLLTAISPGRGFWRKQLDHICAHLRSYTQNNTEFRALIGEPRLGRMISAVIQEDSYEVSLRINFISAPPEESRSSSAGQRSRSVTSESQNLSSVTEGRNSASPENNINTTGSEVKKKKKKKIGTSDVTENQPESKDSLLLKEVGPEGRGRIPAVQQLLDEGADPACLGKDGRPALVAAVLNGHHDVIPVLVQREADVNQASGPLKNTALHEAAALGDEGLKSVEILLGCNASIRKQNDRGQTPYDIAVAAGSSSVLSLMAAHLGQGLLLRHTKARSLSGLDTFS.

DZANK-type zinc fingers lie at residues 210-270 (CPKC…VVCE) and 338-386 (CSKC…GGCG). A compositionally biased stretch (basic and acidic residues) spans 448-469 (KKRSQQREAELSRQEQMRDRKP). Disordered regions lie at residues 448-471 (KKRS…KPLL) and 536-614 (PPEE…VGPE). Residues 536-554 (PPEESRSSSAGQRSRSVTS) are compositionally biased toward low complexity. Positions 555 to 580 (ESQNLSSVTEGRNSASPENNINTTGS) are enriched in polar residues. A compositionally biased stretch (basic and acidic residues) spans 600–614 (PESKDSLLLKEVGPE). 3 ANK repeats span residues 638 to 667 (DGRP…DVNQ), 672 to 703 (LKNT…SIRK), and 707 to 737 (RGQT…GLLL).

The protein resides in the cytoplasm. It localises to the cytoskeleton. Its subcellular location is the microtubule organizing center. The protein localises to the centrosome. It is found in the cilium basal body. Required for the intracellular transport of organelles and vesicles, and is essential for the photoreceptor's outer segments formation, maintenance and function. The sequence is that of Double zinc ribbon and ankyrin repeat-containing protein 1 (dzank1) from Danio rerio (Zebrafish).